Consider the following 431-residue polypeptide: Galactose-3-O-sulfotransferase 3 (431 aa).

At 1–19 (MPPILQRLQQSTKMMSHRK) the chain is on the cytoplasmic side. A helical; Signal-anchor for type II membrane protein membrane pass occupies residues 20 to 40 (ILLLVLGCSTVSLLIHQGSQL). The Lumenal portion of the chain corresponds to 41–431 (SWYPKLFPLS…RALPRIPQGT (391 aa)). N-linked (GlcNAc...) asparagine glycosylation is found at Asn91, Asn110, Asn177, and Asn302. The tract at residues 400–431 (KRRGGVRSRPESVLDNPPPRPIRALPRIPQGT) is disordered. Residues 421 to 431 (IRALPRIPQGT) show a composition bias toward low complexity.

It belongs to the galactose-3-O-sulfotransferase family. Mg(2+) serves as cofactor.

Its subcellular location is the golgi apparatus. The protein localises to the golgi stack membrane. Its pathway is protein modification; carbohydrate sulfation. Functionally, transfers a sulfate to position 3 of non-reducing beta-galactosyl residues in N-glycans and core2-branched O-glycans. Has high activity towards Gal-beta-1,4-GlcNAc, Gal-beta-1,4(Fuc-alpha-1,3)GlcNAc and lower activity towards Gal-beta-1,3(Fuc-alpha-1,4)GlcNAc. The chain is Galactose-3-O-sulfotransferase 3 (Gal3st3) from Mus musculus (Mouse).